The sequence spans 414 residues: Probable peptidoglycan glycosyltransferase FtsW (414 aa).

The Cytoplasmic portion of the chain corresponds to Met-1–Arg-12. A helical transmembrane segment spans residues Leu-13–Ser-33. The Periplasmic segment spans residues Arg-34–Thr-47. A helical membrane pass occupies residues Leu-48–Met-68. Residues Pro-69–Gly-86 are Cytoplasmic-facing. A helical transmembrane segment spans residues Val-87–Trp-107. The Periplasmic segment spans residues Gln-108–Ser-111. The helical transmembrane segment at Ala-112–Val-132 threads the bilayer. Residues Lys-133–Asn-174 lie on the Cytoplasmic side of the membrane. The chain crosses the membrane as a helical span at residues Leu-175–Ala-194. At Gln-195–Asp-197 the chain is on the periplasmic side. The chain crosses the membrane as a helical span at residues Leu-198 to Ala-217. Lys-218 is a topological domain (cytoplasmic). A helical transmembrane segment spans residues Leu-219–Ala-239. The Periplasmic segment spans residues Glu-240 to Ala-301. Residues Ile-302 to Val-322 traverse the membrane as a helical segment. Residues Ala-323–Gly-342 are Cytoplasmic-facing. A helical transmembrane segment spans residues Phe-343–Ala-363. The Periplasmic segment spans residues Ala-364–Thr-373. The chain crosses the membrane as a helical span at residues Leu-374 to Leu-394. Residues Leu-395–Arg-414 lie on the Cytoplasmic side of the membrane.

The protein belongs to the SEDS family. FtsW subfamily.

The protein localises to the cell inner membrane. The catalysed reaction is [GlcNAc-(1-&gt;4)-Mur2Ac(oyl-L-Ala-gamma-D-Glu-L-Lys-D-Ala-D-Ala)](n)-di-trans,octa-cis-undecaprenyl diphosphate + beta-D-GlcNAc-(1-&gt;4)-Mur2Ac(oyl-L-Ala-gamma-D-Glu-L-Lys-D-Ala-D-Ala)-di-trans,octa-cis-undecaprenyl diphosphate = [GlcNAc-(1-&gt;4)-Mur2Ac(oyl-L-Ala-gamma-D-Glu-L-Lys-D-Ala-D-Ala)](n+1)-di-trans,octa-cis-undecaprenyl diphosphate + di-trans,octa-cis-undecaprenyl diphosphate + H(+). Its pathway is cell wall biogenesis; peptidoglycan biosynthesis. In terms of biological role, peptidoglycan polymerase that is essential for cell division. This is Probable peptidoglycan glycosyltransferase FtsW from Escherichia coli O157:H7.